Consider the following 482-residue polypeptide: tRNA sulfurtransferase (482 aa).

Residues 61–165 (AQYLETLACI…NDELYIISAV (105 aa)) enclose the THUMP domain. ATP contacts are provided by residues 183 to 184 (LL), Lys265, Gly287, and Gln296. A disulfide bridge connects residues Cys344 and Cys456. The region spanning 404–482 (LAADEVILDI…GFDNVKVYRP (79 aa)) is the Rhodanese domain. Cys456 functions as the Cysteine persulfide intermediate in the catalytic mechanism.

It belongs to the ThiI family.

The protein resides in the cytoplasm. It carries out the reaction [ThiI sulfur-carrier protein]-S-sulfanyl-L-cysteine + a uridine in tRNA + 2 reduced [2Fe-2S]-[ferredoxin] + ATP + H(+) = [ThiI sulfur-carrier protein]-L-cysteine + a 4-thiouridine in tRNA + 2 oxidized [2Fe-2S]-[ferredoxin] + AMP + diphosphate. The catalysed reaction is [ThiS sulfur-carrier protein]-C-terminal Gly-Gly-AMP + S-sulfanyl-L-cysteinyl-[cysteine desulfurase] + AH2 = [ThiS sulfur-carrier protein]-C-terminal-Gly-aminoethanethioate + L-cysteinyl-[cysteine desulfurase] + A + AMP + 2 H(+). Its pathway is cofactor biosynthesis; thiamine diphosphate biosynthesis. Its function is as follows. Catalyzes the ATP-dependent transfer of a sulfur to tRNA to produce 4-thiouridine in position 8 of tRNAs, which functions as a near-UV photosensor. Also catalyzes the transfer of sulfur to the sulfur carrier protein ThiS, forming ThiS-thiocarboxylate. This is a step in the synthesis of thiazole, in the thiamine biosynthesis pathway. The sulfur is donated as persulfide by IscS. The polypeptide is tRNA sulfurtransferase (Aeromonas salmonicida (strain A449)).